A 486-amino-acid chain; its full sequence is MIQLNEPLTHVRTKPILISLEFESPGRKTIDSVATESVLNSVVKINTFSSKPNICYPWQNKPQKKSKGSGFVIPGKMIITNAHVVANHILVLVIKRGSPKKYKAEVKAIGRECDLAILVIESKEFWEDMNPLELGDMPFLQESVNVIGYPTGGENISVTKGVVSRIESMDYAHGAINLPAIQTDAAMNPGNSGGPVCIGNKVVGVAFQTLGHSNNIGCLIPAPVVKHFITGVEKTGQYVGFCSLNLSYQHMDAQTRSHFKMNSEMTGILIYNINQHSDALNILKKYDVILSIDGVAIENDGTVIIPNRERTRLDDLVSLKQLGETILLKILREGKMHEFNITLRPVQRLVPAGQIDNNPSYYIFAGFVFVPLRKQHFKGSNGEQIVVISEVLADVINVEYYMYKHLKVNSVNKVKVENLKHLCELIEKCCTKDLRLELGDGRVIILDYQFAKSSTSLILERHRVPWAMSKDLMTDQSTTCSSTRLY.

The interval 44 to 229 is serine protease; sequence KINTFSSKPN…IPAPVVKHFI (186 aa). Catalysis depends on charge relay system residues H83, D114, and S192. The region spanning 241–334 is the PDZ domain; the sequence is FCSLNLSYQH…TILLKILREG (94 aa).

The protein belongs to the peptidase S1C family.

In terms of biological role, putative serine protease. The polypeptide is Putative protease Do-like 13 (DEGP13) (Arabidopsis thaliana (Mouse-ear cress)).